The primary structure comprises 354 residues: MAELKNDRYLRALLKQPVDMTPVWMMRQAGRYLPEYKATRAQAGDFMSLCKNHELACEVTLQPLRRYELDAAILFSDILTVPDAMGLGLYFEAGEGPRFERPTDTIDAIKKLSIPDPEDELGYVMKAVSTIRRELNGQVPLIGFSGSPWTLATYMVEGGSSKTFEKIKKMAYAEPAALHMLLDKLADSVTLYLNAQVANGAQSLMIFDSWGGALSHTAYREFSLRYMQKIVDGLTRFADGRQVPVTLFTKGGGLWLEAMAETGCDALGLDWTVDIADARRRVGHKVALQGNMDPSMLYAPIPRIEEEVGQILAGYGEGTGHVFNLGHGIHQHVDPEHAGAFIKAVHAQSKQYHK.

Substrate-binding positions include 27–31 (RQAGR), phenylalanine 46, aspartate 77, tyrosine 154, serine 209, and histidine 327.

This sequence belongs to the uroporphyrinogen decarboxylase family. Homodimer.

It localises to the cytoplasm. It carries out the reaction uroporphyrinogen III + 4 H(+) = coproporphyrinogen III + 4 CO2. It participates in porphyrin-containing compound metabolism; protoporphyrin-IX biosynthesis; coproporphyrinogen-III from 5-aminolevulinate: step 4/4. Functionally, catalyzes the decarboxylation of four acetate groups of uroporphyrinogen-III to yield coproporphyrinogen-III. The chain is Uroporphyrinogen decarboxylase from Shewanella oneidensis (strain ATCC 700550 / JCM 31522 / CIP 106686 / LMG 19005 / NCIMB 14063 / MR-1).